We begin with the raw amino-acid sequence, 310 residues long: D-alanyl-D-alanine endopeptidase (310 aa).

Positions 1 to 25 (MPKFRVSLFSLALMLAVPFAPQAVA) are cleaved as a signal peptide. The active-site Acyl-ester intermediate is the Ser67. Lys70 acts as the Proton acceptor in catalysis. The active site involves Ser124. Lys231 is a binding site for substrate.

It belongs to the peptidase S11 family. In terms of processing, pbp8 is a proteolytic product of Pbp7.

Its subcellular location is the periplasm. In terms of biological role, cell wall formation. May play a specialized role in remodeling the cell wall. Specifically hydrolyzes the DD-diaminopimelate-alanine bonds in high-molecular-mass murein sacculi. The sequence is that of D-alanyl-D-alanine endopeptidase (pbpG) from Escherichia coli (strain K12).